The chain runs to 167 residues: Transmembrane protein 229B (167 aa).

Over 1 to 14 (MASAEPLTALSRWY) the chain is Cytoplasmic. Residues 15–35 (LYAIHGYFCEVMFTAAWEFVV) traverse the membrane as a helical segment. Topologically, residues 36 to 40 (NLNWK) are extracellular. Residues 41–61 (FPGVTSVWALFIYGTSILIVE) form a helical membrane-spanning segment. Over 62–73 (RMYLRLRGRCPL) the chain is Cytoplasmic. A helical membrane pass occupies residues 74-94 (LLRCLIYTLWTYLWEFTTGFI). The Extracellular portion of the chain corresponds to 95 to 109 (LRQFNACPWDYSQFD). A helical transmembrane segment spans residues 110 to 130 (FDFMGLITLEYAVPWFCGALI). The Cytoplasmic portion of the chain corresponds to 131 to 167 (MEQFIIRNTLRLRFDKDAEPGEPSGALALANGHVKTD).

This sequence belongs to the TMEM229 family.

It localises to the membrane. The polypeptide is Transmembrane protein 229B (TMEM229B) (Homo sapiens (Human)).